The sequence spans 347 residues: Histone deacetylase 11 (347 aa).

The tract at residues T14 to N318 is histone deacetylase. H143 is a catalytic residue.

It belongs to the histone deacetylase family. Interacts with HDAC6.

Its subcellular location is the nucleus. It catalyses the reaction N(6)-acetyl-L-lysyl-[histone] + H2O = L-lysyl-[histone] + acetate. Responsible for the deacetylation of lysine residues on the N-terminal part of the core histones (H2A, H2B, H3 and H4). Histone deacetylation gives a tag for epigenetic repression and plays an important role in transcriptional regulation, cell cycle progression and developmental events. Histone deacetylases act via the formation of large multiprotein complexes. This is Histone deacetylase 11 (HDAC11) from Macaca fascicularis (Crab-eating macaque).